The following is a 307-amino-acid chain: MTSRPSSDQTWQPIDGRVALIAPASAIATDVLEATLRQLEVHGVDYHLGRHVEARYRYLAGTVEQRLEDLHNAFDMPDITAVWCLRGGYGCGQLLPGLDWGRLQAASPRPLIGFSDISVLLSAFHRHGLPAIHGPVATGLGLSPLSAPREQQERLASLASVSRLLAGIDHELPVQHLGGHKQRVEGALIGGNLTALACMAGTLGGLHAPAGSILVLEDVGEPYYRLERSLWQLLESIDARQLGAICLGSFTDCPRKEVAHSLERIFGEYAAAIEVPLYHHLPSGHGAQNRAWPYGKTAVLEGNRLRW.

S115 functions as the Nucleophile in the catalytic mechanism. Catalysis depends on charge relay system residues E217 and H285.

It belongs to the peptidase S66 family. As to quaternary structure, homodimer.

The protein resides in the cytoplasm. It catalyses the reaction N-acetyl-D-glucosaminyl-N-acetylmuramoyl-L-alanyl-meso-2,6-diaminoheptanedioyl-D-alanine + H2O = N-acetyl-D-glucosaminyl-N-acetylmuramoyl-L-alanyl-meso-2,6-diaminoheptanedioate + D-alanine. It participates in cell wall biogenesis; peptidoglycan recycling. Its function is as follows. Releases the terminal D-alanine residue from the cytoplasmic disaccharide-tetrapeptide GlcNAc-MurNAc-L-Ala-gamma-D-Glu-meso-Dap-D-Ala, which is a murein turnover product. Probably also act on free tetrapetide. May be involved in murein recycling. This chain is Murein tetrapeptide carboxypeptidase, found in Pseudomonas aeruginosa (strain ATCC 15692 / DSM 22644 / CIP 104116 / JCM 14847 / LMG 12228 / 1C / PRS 101 / PAO1).